The chain runs to 128 residues: Fluoride-specific ion channel FluC (128 aa).

The next 4 membrane-spanning stretches (helical) occupy residues 3 to 23 (FTTI…RSFT), 34 to 54 (LSFP…IGFL), 65 to 85 (INLK…FSTF), and 102 to 122 (FLNI…GFWI). Na(+) contacts are provided by Gly-77 and Thr-80.

The protein belongs to the fluoride channel Fluc/FEX (TC 1.A.43) family.

It is found in the cell inner membrane. The enzyme catalyses fluoride(in) = fluoride(out). Its activity is regulated as follows. Na(+) is not transported, but it plays an essential structural role and its presence is essential for fluoride channel function. Fluoride-specific ion channel. Important for reducing fluoride concentration in the cell, thus reducing its toxicity. This is Fluoride-specific ion channel FluC from Campylobacter fetus subsp. fetus (strain 82-40).